A 367-amino-acid chain; its full sequence is Queuine tRNA-ribosyltransferase (367 aa).

The Proton acceptor role is filled by Asp89. Substrate-binding positions include 89–93 (DSGGF), Asp143, Gln185, and Gly212. The interval 243–249 (GVGTPSD) is RNA binding. Asp262 serves as the catalytic Nucleophile. The RNA binding; important for wobble base 34 recognition stretch occupies residues 267 to 271 (TRNAR). Residues Cys300, Cys302, Cys305, and His331 each contribute to the Zn(2+) site.

It belongs to the queuine tRNA-ribosyltransferase family. Homodimer. Within each dimer, one monomer is responsible for RNA recognition and catalysis, while the other monomer binds to the replacement base PreQ1. Zn(2+) serves as cofactor.

It carries out the reaction 7-aminomethyl-7-carbaguanine + guanosine(34) in tRNA = 7-aminomethyl-7-carbaguanosine(34) in tRNA + guanine. Its pathway is tRNA modification; tRNA-queuosine biosynthesis. In terms of biological role, catalyzes the base-exchange of a guanine (G) residue with the queuine precursor 7-aminomethyl-7-deazaguanine (PreQ1) at position 34 (anticodon wobble position) in tRNAs with GU(N) anticodons (tRNA-Asp, -Asn, -His and -Tyr). Catalysis occurs through a double-displacement mechanism. The nucleophile active site attacks the C1' of nucleotide 34 to detach the guanine base from the RNA, forming a covalent enzyme-RNA intermediate. The proton acceptor active site deprotonates the incoming PreQ1, allowing a nucleophilic attack on the C1' of the ribose to form the product. After dissociation, two additional enzymatic reactions on the tRNA convert PreQ1 to queuine (Q), resulting in the hypermodified nucleoside queuosine (7-(((4,5-cis-dihydroxy-2-cyclopenten-1-yl)amino)methyl)-7-deazaguanosine). This is Queuine tRNA-ribosyltransferase from Thiobacillus denitrificans (strain ATCC 25259 / T1).